We begin with the raw amino-acid sequence, 139 residues long: D-ribose pyranase (139 aa).

Residue His-20 is the Proton donor of the active site. Residues Asp-28, His-106, and 128 to 130 (YAN) each bind substrate.

This sequence belongs to the RbsD / FucU family. RbsD subfamily. In terms of assembly, homodecamer.

It is found in the cytoplasm. The catalysed reaction is beta-D-ribopyranose = beta-D-ribofuranose. It functions in the pathway carbohydrate metabolism; D-ribose degradation; D-ribose 5-phosphate from beta-D-ribopyranose: step 1/2. Catalyzes the interconversion of beta-pyran and beta-furan forms of D-ribose. The sequence is that of D-ribose pyranase from Escherichia coli O127:H6 (strain E2348/69 / EPEC).